The following is a 132-amino-acid chain: Fluoride-specific ion channel FluC 2 (132 aa).

The next 4 membrane-spanning stretches (helical) occupy residues Leu-8–Leu-28, Leu-41–Pro-61, Leu-66–Val-86, and Ala-96–Phe-116. 2 residues coordinate Na(+): Gly-73 and Thr-76.

This sequence belongs to the fluoride channel Fluc/FEX (TC 1.A.43) family.

It localises to the cell inner membrane. It carries out the reaction fluoride(in) = fluoride(out). With respect to regulation, na(+) is not transported, but it plays an essential structural role and its presence is essential for fluoride channel function. Its function is as follows. Fluoride-specific ion channel. Important for reducing fluoride concentration in the cell, thus reducing its toxicity. This is Fluoride-specific ion channel FluC 2 from Synechococcus sp. (strain CC9605).